Here is a 274-residue protein sequence, read N- to C-terminus: 2,3,4,5-tetrahydropyridine-2,6-dicarboxylate N-succinyltransferase (274 aa).

This sequence belongs to the transferase hexapeptide repeat family.

It localises to the cytoplasm. The catalysed reaction is (S)-2,3,4,5-tetrahydrodipicolinate + succinyl-CoA + H2O = (S)-2-succinylamino-6-oxoheptanedioate + CoA. It participates in amino-acid biosynthesis; L-lysine biosynthesis via DAP pathway; LL-2,6-diaminopimelate from (S)-tetrahydrodipicolinate (succinylase route): step 1/3. The sequence is that of 2,3,4,5-tetrahydropyridine-2,6-dicarboxylate N-succinyltransferase from Escherichia fergusonii (strain ATCC 35469 / DSM 13698 / CCUG 18766 / IAM 14443 / JCM 21226 / LMG 7866 / NBRC 102419 / NCTC 12128 / CDC 0568-73).